Here is an 803-residue protein sequence, read N- to C-terminus: Leucine--tRNA ligase (803 aa).

The 'HIGH' region motif lies at 40–51; the sequence is PYPSGAGLHVGH. A 'KMSKS' region motif is present at residues 575–579; it reads KMSKS. Residue Lys-578 participates in ATP binding.

The protein belongs to the class-I aminoacyl-tRNA synthetase family.

It localises to the cytoplasm. The enzyme catalyses tRNA(Leu) + L-leucine + ATP = L-leucyl-tRNA(Leu) + AMP + diphosphate. In Listeria innocua serovar 6a (strain ATCC BAA-680 / CLIP 11262), this protein is Leucine--tRNA ligase.